The primary structure comprises 250 residues: Putative B3 domain-containing protein At4g03170 (250 aa).

The segment covering 1–12 (MANSTGKPTSST) has biased composition (polar residues). The tract at residues 1–90 (MANSTGKPTS…EKNQPKRFKK (90 aa)) is disordered. The span at 34–56 (DREEDIDDEDDIDDEVIDDEDYE) shows a compositional bias: acidic residues. The span at 72–84 (QSREREEETEKNQ) shows a compositional bias: basic and acidic residues. The TF-B3 DNA-binding region spans 137 to 245 (KKQLMSSDVD…KLCFAIHYVK (109 aa)).

The protein resides in the nucleus. The sequence is that of Putative B3 domain-containing protein At4g03170 from Arabidopsis thaliana (Mouse-ear cress).